The primary structure comprises 909 residues: ABC transporter A family member 10 (909 aa).

Helical transmembrane passes span 35-55, 320-340, 374-394, 406-426, 433-453, 465-485, and 507-527; these read VLVP…LDVV, IASM…FPVI, FLTL…AIGL, FIFY…ASSI, ATVV…FLFG, GILA…YEFA, and LFYL…SIDL. A Phosphoserine modification is found at S555. The ABC transporter domain occupies 587 to 824; that stretch reads IVCDNLKKVY…YGGSYVFTMT (238 aa). 625–632 is an ATP binding site; sequence GPNGAGKT.

Belongs to the ABC transporter superfamily. ABCA family. CPR flippase (TC 3.A.1.211) subfamily.

The protein resides in the membrane. The protein is ABC transporter A family member 10 (ABCA10) of Arabidopsis thaliana (Mouse-ear cress).